A 151-amino-acid chain; its full sequence is uncharacterized protein (151 aa).

4Fe-4S ferredoxin-type domains follow at residues 4–32 (KIIV…ESRV), 33–63 (RKVD…YLKD), and 64–93 (GIPI…IKNR). The [4Fe-4S] cluster site is built by Cys-13, Cys-16, Cys-19, Cys-23, Cys-42, Cys-45, Cys-50, Cys-54, Cys-73, Cys-76, Cys-79, Cys-83, Cys-98, Cys-101, Cys-111, and Cys-115.

Requires [4Fe-4S] cluster as cofactor.

This is an uncharacterized protein from Methanocaldococcus jannaschii (strain ATCC 43067 / DSM 2661 / JAL-1 / JCM 10045 / NBRC 100440) (Methanococcus jannaschii).